Here is an 87-residue protein sequence, read N- to C-terminus: Putative membrane protein insertion efficiency factor (87 aa).

The protein belongs to the UPF0161 family.

It is found in the cell membrane. Its function is as follows. Could be involved in insertion of integral membrane proteins into the membrane. This chain is Putative membrane protein insertion efficiency factor, found in Ligilactobacillus salivarius (strain UCC118) (Lactobacillus salivarius).